The chain runs to 201 residues: Probable molybdenum cofactor guanylyltransferase (201 aa).

GTP contacts are provided by residues 6–8 (LAG), Lys18, Asp65, and Asp97. Asp97 is a Mg(2+) binding site.

It belongs to the MobA family. It depends on Mg(2+) as a cofactor.

The protein resides in the cytoplasm. It catalyses the reaction Mo-molybdopterin + GTP + H(+) = Mo-molybdopterin guanine dinucleotide + diphosphate. Functionally, transfers a GMP moiety from GTP to Mo-molybdopterin (Mo-MPT) cofactor (Moco or molybdenum cofactor) to form Mo-molybdopterin guanine dinucleotide (Mo-MGD) cofactor. The chain is Probable molybdenum cofactor guanylyltransferase from Staphylococcus epidermidis (strain ATCC 35984 / DSM 28319 / BCRC 17069 / CCUG 31568 / BM 3577 / RP62A).